We begin with the raw amino-acid sequence, 317 residues long: Probable cell division protein WhiA (317 aa).

The segment at residues 278-311 (SLQGLGELLDPQVGKSGVNHRLRKIGEKADELRQ) is a DNA-binding region (H-T-H motif).

The protein belongs to the WhiA family.

Functionally, involved in cell division and chromosome segregation. The protein is Probable cell division protein WhiA of Lachnospira eligens (strain ATCC 27750 / DSM 3376 / VPI C15-48 / C15-B4) (Eubacterium eligens).